The chain runs to 1649 residues: PHD and RING finger domain-containing protein 1 (1649 aa).

A disordered region spans residues Met-1–Asp-79. At Ser-5 the chain carries Phosphoserine. Acidic residues predominate over residues Thr-54–Asp-79. Residues Cys-108–Arg-149 form an RING-type; degenerate zinc finger. The PHD-type zinc-finger motif lies at Pro-183–Pro-233. The tract at residues Val-324–Gly-398 is disordered. A Phosphothreonine modification is found at Thr-330. Positions Pro-334–Thr-353 are enriched in basic residues. Over residues Pro-354–Thr-366 the composition is skewed to low complexity. Over residues Arg-367 to Lys-382 the composition is skewed to basic residues. Phosphoserine occurs at positions 445 and 455. 4 disordered regions span residues Lys-534 to Val-600, Ser-644 to Gln-871, Phe-888 to Leu-1240, and Ile-1281 to Arg-1395. Residues Ser-568–Ser-589 are compositionally biased toward polar residues. Composition is skewed to basic and acidic residues over residues Ile-685–Ala-697 and Thr-727–Gly-742. A compositionally biased stretch (polar residues) spans Ala-786–Phe-796. Basic and acidic residues predominate over residues Pro-802–Asn-812. Ser-814, Ser-845, Ser-846, Ser-864, Ser-867, and Ser-915 each carry phosphoserine. Polar residues-rich tracts occupy residues Pro-835–Glu-848 and Ile-859–Gln-871. A Phosphothreonine modification is found at Thr-917. A phosphoserine mark is found at Ser-936, Ser-973, and Ser-991. The span at Arg-988 to Ser-999 shows a compositional bias: low complexity. A compositionally biased stretch (basic residues) spans Arg-1000–Ser-1011. Positions Arg-1012–Ser-1030 are enriched in basic and acidic residues. The span at Arg-1043–Arg-1053 shows a compositional bias: basic residues. Positions Ser-1054–Glu-1063 are enriched in basic and acidic residues. Over residues Arg-1064–Arg-1090 the composition is skewed to basic residues. The span at Ser-1091–Tyr-1101 shows a compositional bias: low complexity. Over residues Ser-1106–Pro-1118 the composition is skewed to basic residues. A phosphoserine mark is found at Ser-1124 and Ser-1128. 2 stretches are compositionally biased toward basic and acidic residues: residues Arg-1141 to Ser-1151 and Arg-1181 to Val-1198. Ser-1202 and Ser-1229 each carry phosphoserine. Low complexity predominate over residues Asp-1284–Ser-1297. Positions His-1345–Glu-1356 are enriched in basic and acidic residues. 3 positions are modified to phosphoserine: Ser-1359, Ser-1360, and Ser-1371. Thr-1404 is subject to Phosphothreonine. 4 disordered regions span residues Leu-1407–Glu-1439, Phe-1455–Ser-1486, Thr-1526–Lys-1556, and Met-1630–Gly-1649. The span at Pro-1531–Asn-1540 shows a compositional bias: polar residues. The span at Ser-1541–Lys-1556 shows a compositional bias: basic and acidic residues. A coiled-coil region spans residues Arg-1549–Lys-1579.

Interacts with POLR2A (via the C-terminal domain).

The protein is PHD and RING finger domain-containing protein 1 (PHRF1) of Homo sapiens (Human).